Here is a 213-residue protein sequence, read N- to C-terminus: Imidazole glycerol phosphate synthase subunit HisH (213 aa).

A Glutamine amidotransferase type-1 domain is found at 6 to 213 (LVTVIDYGMG…FKNFLNWNGQ (208 aa)). The active-site Nucleophile is Cys86. Catalysis depends on residues His192 and Glu194.

Heterodimer of HisH and HisF.

Its subcellular location is the cytoplasm. It carries out the reaction 5-[(5-phospho-1-deoxy-D-ribulos-1-ylimino)methylamino]-1-(5-phospho-beta-D-ribosyl)imidazole-4-carboxamide + L-glutamine = D-erythro-1-(imidazol-4-yl)glycerol 3-phosphate + 5-amino-1-(5-phospho-beta-D-ribosyl)imidazole-4-carboxamide + L-glutamate + H(+). The catalysed reaction is L-glutamine + H2O = L-glutamate + NH4(+). The protein operates within amino-acid biosynthesis; L-histidine biosynthesis; L-histidine from 5-phospho-alpha-D-ribose 1-diphosphate: step 5/9. Functionally, IGPS catalyzes the conversion of PRFAR and glutamine to IGP, AICAR and glutamate. The HisH subunit catalyzes the hydrolysis of glutamine to glutamate and ammonia as part of the synthesis of IGP and AICAR. The resulting ammonia molecule is channeled to the active site of HisF. In Hydrogenovibrio crunogenus (strain DSM 25203 / XCL-2) (Thiomicrospira crunogena), this protein is Imidazole glycerol phosphate synthase subunit HisH.